The sequence spans 264 residues: MRILFIGDVVGSPGRDMVKEYVPKLKTKYKPHFTIINGENAAHGKGLTEKIYHSLIQSGADAITMGNHTWDKKEIFDFIDDVPNLVRPANFPEGTPGKGITYVKANGKELAVINLQGRTFLPPLDDPFLKADELIAEAAKRTPYIFIDFHAEATSEKLALGWYTDGRASAVVGTHTHVQTADNRILPKGTAYITDVGMTGPYDGILGMDRETIIKRFKTNLPVRFTVAEGKTTLSGVVIDIDDQTKKAVKIERILINDDHMFFE.

4 residues coordinate Fe cation: aspartate 8, glutamate 39, asparagine 40, and asparagine 67. The Proton donor role is filled by histidine 68. Fe cation is bound by residues histidine 150, histidine 175, and histidine 177.

Belongs to the YmdB-like family. In terms of assembly, homodimer. Fe(2+) serves as cofactor. It depends on Fe(3+) as a cofactor.

It localises to the cytoplasm. The enzyme catalyses a nucleoside 2',3'-cyclic phosphate + H2O = a nucleoside 3'-phosphate + H(+). Plays a central, regulatory role in the late adaptive responses and affects the levels of many genes. May act via regulation of cAMP levels. Decreases the expression of motility genes and induces genes involved in biofilm formation, by controlling the expression of SlrR. Required for formation of intercellular nanotubes that bridge neighboring cells to allow molecular exchange. Plays a key role in directing the early stages of colony development. In vitro, has a metal-dependent phosphodiesterase activity against 2',3'-cAMP and 2',3'-cGMP. Also has 3',5'-cyclic-nucleotide phosphodiesterase activity, but cannot use cyclic di-AMP or cyclic di-GMP, and does not have phosphatase activity. The protein is 2',3'-cyclic-nucleotide 2'-phosphodiesterase (ymdB) of Bacillus subtilis (strain 168).